We begin with the raw amino-acid sequence, 120 residues long: Large ribosomal subunit protein uL18 (120 aa).

The segment at 1–26 (MSKAKVTNARRKRSVRLKLRRSGGGR) is disordered. Residues 8 to 23 (NARRKRSVRLKLRRSG) show a composition bias toward basic residues.

This sequence belongs to the universal ribosomal protein uL18 family. As to quaternary structure, part of the 50S ribosomal subunit; part of the 5S rRNA/L5/L18/L25 subcomplex. Contacts the 5S and 23S rRNAs.

Functionally, this is one of the proteins that bind and probably mediate the attachment of the 5S RNA into the large ribosomal subunit, where it forms part of the central protuberance. The protein is Large ribosomal subunit protein uL18 of Bradyrhizobium diazoefficiens (strain JCM 10833 / BCRC 13528 / IAM 13628 / NBRC 14792 / USDA 110).